A 501-amino-acid polypeptide reads, in one-letter code: Solute carrier family 2, facilitated glucose transporter member 5 (501 aa).

Met-1 is modified (N-acetylmethionine). The Cytoplasmic portion of the chain corresponds to 1–18 (MEPQDPVKREGRLTPVIV). The chain crosses the membrane as a helical span at residues 19–39 (LATLIAAFGSSFQYGYNVAAI). Tyr-32 is a binding site for D-fructose. The Extracellular segment spans residues 40-68 (NSPSEFMKDFYNYTYYDRVGEYMNEFYLT). N-linked (GlcNAc...) asparagine glycosylation occurs at Asn-51. Residues 69–91 (LLWSVTVSMFPFGGFLGSLMVGP) form a helical membrane-spanning segment. The Cytoplasmic portion of the chain corresponds to 92–98 (LVNNLGR). A helical transmembrane segment spans residues 99-119 (KGTLLFNNIFSIVPALLMGFS). Residues 120 to 126 (ELAKSFE) are Extracellular-facing. A helical transmembrane segment spans residues 127 to 149 (MIIVARVLVGICAGLSSNVVPMY). Topologically, residues 150–161 (LGELAPKNWRGA) are cytoplasmic. A helical membrane pass occupies residues 162-182 (LGVVPQLFITIGILVAQIFGL). Gln-167 is a binding site for D-fructose. Over 183–192 (RSLLANEEGW) the chain is Extracellular. Residues 193-213 (PILLGLTGIPAVLQLLFLPFF) traverse the membrane as a helical segment. Over 214 to 277 (PESPRYLLIQ…LFKMRSLRWQ (64 aa)) the chain is Cytoplasmic. A helical transmembrane segment spans residues 278 to 298 (VISIIVLMAGQQLSGVNAIYY). Residues Gln-288 and 296 to 298 (IYY) each bind D-fructose. Residues 299-313 (YADQIYLSAGVNEDD) lie on the Extracellular side of the membrane. A helical transmembrane segment spans residues 314 to 334 (VQYVTAGTGAVNVLITVCAIF). Residues 335 to 342 (VVELMGRR) lie on the Cytoplasmic side of the membrane. Residues 343-363 (FLLLLGFSVCFTACCVLTGAL) traverse the membrane as a helical segment. Topologically, residues 364 to 371 (ALQDVISW) are extracellular. A helical transmembrane segment spans residues 372-394 (MPYVSIACVISYVIGHALGPSPI). His-387 serves as a coordination point for D-fructose. At 395–412 (PALLVTEIFLQSSRPAAY) the chain is on the cytoplasmic side. Residues 413 to 433 (MVAGTVHWLSNFTVGLVFPFI) form a helical membrane-spanning segment. Residue 419 to 420 (HW) coordinates D-fructose. The Extracellular portion of the chain corresponds to 434–439 (QVGLGA). A helical transmembrane segment spans residues 440-460 (YSFVIFAVICLLTTVYIFLII). Residues 461 to 501 (PETKSKTFIEINRIFIKMNKVPGVHPEKEELKEFPPSTARQ) lie on the Cytoplasmic side of the membrane.

The protein belongs to the major facilitator superfamily. Sugar transporter (TC 2.A.1.1) family. Glucose transporter subfamily.

The protein resides in the apical cell membrane. It localises to the cell membrane. The protein localises to the sarcolemma. It carries out the reaction D-fructose(out) = D-fructose(in). Its function is as follows. Functions as a fructose transporter that has only low activity with other monosaccharides. Can mediate the uptake of deoxyglucose, but with low efficiency. Essential for fructose uptake in the small intestine. Plays a role in the regulation of salt uptake and blood pressure in response to dietary fructose. Required for the development of high blood pressure in response to high dietary fructose intake. The polypeptide is Solute carrier family 2, facilitated glucose transporter member 5 (Bos taurus (Bovine)).